The sequence spans 210 residues: Large ribosomal subunit protein uL3 (210 aa).

Residues 131–140 (NRASHGNSLS) are compositionally biased toward polar residues. Residues 131–150 (NRASHGNSLSHRAPGSIGCR) are disordered. An N5-methylglutamine modification is found at Gln-151.

It belongs to the universal ribosomal protein uL3 family. Part of the 50S ribosomal subunit. Forms a cluster with proteins L14 and L19. Methylated by PrmB.

Its function is as follows. One of the primary rRNA binding proteins, it binds directly near the 3'-end of the 23S rRNA, where it nucleates assembly of the 50S subunit. This Acidithiobacillus ferrooxidans (strain ATCC 23270 / DSM 14882 / CIP 104768 / NCIMB 8455) (Ferrobacillus ferrooxidans (strain ATCC 23270)) protein is Large ribosomal subunit protein uL3.